Consider the following 227-residue polypeptide: tRNA (guanine-N(7)-)-methyltransferase (227 aa).

The tract at residues 1-21 (MPDMTMKSQPDRLYGRQRGHA) is disordered. Glu54, Glu79, Asp114, and Asp136 together coordinate S-adenosyl-L-methionine. The active site involves Asp136. Substrate contacts are provided by residues Lys140, Asp172, and 206 to 209 (TRYE).

It belongs to the class I-like SAM-binding methyltransferase superfamily. TrmB family.

The catalysed reaction is guanosine(46) in tRNA + S-adenosyl-L-methionine = N(7)-methylguanosine(46) in tRNA + S-adenosyl-L-homocysteine. Its pathway is tRNA modification; N(7)-methylguanine-tRNA biosynthesis. Its function is as follows. Catalyzes the formation of N(7)-methylguanine at position 46 (m7G46) in tRNA. This is tRNA (guanine-N(7)-)-methyltransferase from Granulibacter bethesdensis (strain ATCC BAA-1260 / CGDNIH1).